We begin with the raw amino-acid sequence, 87 residues long: MTILSAITSISRPNKSSKSVVSSNGGSSLSMGSNSVSCFNACGGGSSYSYSSSYSGSGLDYSYKANYSSSNGYNSSVVIASSTCHCS.

Residues 1–13 (MTILSAITSISRP) are compositionally biased toward polar residues. Residues 1–31 (MTILSAITSISRPNKSSKSVVSSNGGSSLSM) form a disordered region. Over residues 14-31 (NKSSKSVVSSNGGSSLSM) the composition is skewed to low complexity.

The protein belongs to the hssA/B family.

This is HssA/B-like protein 55 (hssl55) from Dictyostelium discoideum (Social amoeba).